The primary structure comprises 1291 residues: GRB10-interacting GYF protein 2 (1291 aa).

Alanine 2 bears the N-acetylalanine mark. Phosphoserine is present on residues serine 19, serine 26, and serine 30. Residues arginine 107, arginine 119, and arginine 121 each carry the omega-N-methylarginine modification. The interval 112-132 (GTVVGAPRGRSSSRGRGRGRG) is disordered. Serine 140 is modified (phosphoserine). Disordered regions lie at residues 148-196 (FGRG…RKHE), 209-248 (REEQNGEDEDGGWRLAGSRRDGERWRPHSPDGPRSTGWRE), and 267-484 (RGYR…TEPD). Arginine 150 carries the post-translational modification Omega-N-methylarginine. The segment covering 152–183 (GGREMHRSQSWEERGDRRFEKPGRKDVGRPNF) has biased composition (basic and acidic residues). Serine 161, serine 190, and serine 237 each carry phosphoserine. The segment covering 226 to 248 (SRRDGERWRPHSPDGPRSTGWRE) has biased composition (basic and acidic residues). The DDX6 binding motif signature appears at 281 to 311 (DDRDSLPEWCLEDAEEEMGTFDSSGAFLSLK). The span at 290-299 (CLEDAEEEMG) shows a compositional bias: acidic residues. The span at 313–364 (VQKEPIPEEQEMDFRPVEEGEERSDSDSSHNEEAKEPDKTNRREGEKTDRAG) shows a compositional bias: basic and acidic residues. A compositionally biased stretch (polar residues) spans 371–393 (VPQTSLSSARPGTPSDHQPQEAT). At threonine 383 the chain carries Phosphothreonine. Residues 394–415 (QFERKDEPKAEQVEKAEEENRS) show a composition bias toward basic and acidic residues. Residues 534-582 (MQKWYYKDPQGEIQGPFNNQEMAEWFQAGYFTMSLLVKRACDESFQPLG) form the GYF domain. The required for GRB10-binding stretch occupies residues 548 to 564 (GPFNNQEMAEWFQAGYF). Serine 594 is modified (phosphoserine). 5 disordered regions span residues 732 to 794 (KAKA…QEEA), 846 to 937 (EEAA…SNTA), 958 to 998 (ERQL…SKPA), 1011 to 1053 (EARQ…SVWG), and 1090 to 1118 (KEVGPRNSTNKNKNNASLSKSVGVSNRQN). Over residues 846–898 (EEAAKWAREEEEAQRRLEENRLRMEEEAARLRHEEEERKRKELELQRQKDLMR) the composition is skewed to basic and acidic residues. The span at 899 to 924 (QRQQQQEALRRLQQQQQQQQLAQMKL) shows a compositional bias: low complexity. The span at 925-937 (PSSSTWGQQSNTA) shows a compositional bias: polar residues. Basic and acidic residues predominate over residues 958 to 973 (ERQLREEQRRQQRELM). Positions 977 to 986 (QQQQQQQQQQ) are enriched in low complexity. At serine 995 the chain carries Phosphoserine. Positions 1015–1031 (MQKQQQQQQQQQQQHQQ) are enriched in low complexity. Residues 1032–1053 (SNRARNSTHSNLHTSLGNSVWG) show a composition bias toward polar residues. A compositionally biased stretch (low complexity) spans 1096–1110 (NSTNKNKNNASLSKS). A Glycyl lysine isopeptide (Lys-Gly) (interchain with G-Cter in SUMO2) cross-link involves residue lysine 1129. 2 disordered regions span residues 1202-1223 (AKQKVNQQRQQQQQQQQQQDSV) and 1239-1263 (QSNNQQSNFEAVQSGKKKKKQKMVR). Positions 1208-1220 (QQRQQQQQQQQQQ) are enriched in low complexity. A Phosphoserine modification is found at serine 1276.

It belongs to the GIGYF family. As to quaternary structure, component of the 4EHP-GYF2 complex, at least composed of EIF4E2, GIGYF2 and ZNF598. Interacts (via the 4EHP-binding motif) with EIF4E2; the interaction is direct. Interacts with ZFP36/TTP (via P-P-P-P-G repeats); the interaction is direct. Interacts with GRB10. Interacts (via DDX6 motif) with DDX6 (via RecA-like domain 2). As to expression, expressed in heart, liver, kidney and brain as well as in testis.

Key component of the 4EHP-GYF2 complex, a multiprotein complex that acts as a repressor of translation initiation. In the 4EHP-GYF2 complex, acts as a factor that bridges EIF4E2 to ZFP36/TTP, linking translation repression with mRNA decay. Also recruits and bridges the association of the 4EHP complex with the decapping effector protein DDX6, which is required for the ZFP36/TTP-mediated down-regulation of AU-rich mRNA. May act cooperatively with GRB10 to regulate tyrosine kinase receptor signaling, including IGF1 and insulin receptors. In association with EIF4E2, assists ribosome-associated quality control (RQC) by sequestering the mRNA cap, blocking ribosome initiation and decreasing the translational load on problematic messages. Part of a pathway that works in parallel to RQC-mediated degradation of the stalled nascent polypeptide. GIGYF2 and EIF4E2 work downstream and independently of ZNF598, which seems to work as a scaffold that can recruit them to faulty mRNA even if alternative recruitment mechanisms may exist. This is GRB10-interacting GYF protein 2 from Mus musculus (Mouse).